The primary structure comprises 172 residues: LOB domain-containing protein 4 (172 aa).

Residues 12 to 113 (SPCAACKLLR…AQLALAQAEV (102 aa)) enclose the LOB domain. The disordered stretch occupies residues 125–152 (PGHGLCPDSPSSSGSPSSKQVSPQDNKG). Over residues 131-147 (PDSPSSSGSPSSKQVSP) the composition is skewed to low complexity.

It belongs to the LOB domain-containing protein family. Expressed in young shoots, roots, stems, leaves and flowers.

This chain is LOB domain-containing protein 4 (LBD4), found in Arabidopsis thaliana (Mouse-ear cress).